A 1164-amino-acid polypeptide reads, in one-letter code: DNA-directed RNA polymerase subunit beta (1164 aa).

2 disordered regions span residues R975–N994 and A1143–S1164. 2 stretches are compositionally biased toward basic and acidic residues: residues R981–G991 and S1152–S1164.

Belongs to the RNA polymerase beta chain family. In terms of assembly, the RNAP catalytic core consists of 2 alpha, 1 beta, 1 beta' and 1 omega subunit. When a sigma factor is associated with the core the holoenzyme is formed, which can initiate transcription.

The enzyme catalyses RNA(n) + a ribonucleoside 5'-triphosphate = RNA(n+1) + diphosphate. Functionally, DNA-dependent RNA polymerase catalyzes the transcription of DNA into RNA using the four ribonucleoside triphosphates as substrates. The sequence is that of DNA-directed RNA polymerase subunit beta from Corynebacterium jeikeium (strain K411).